The following is a 417-amino-acid chain: Senescence-associated protein AAF, chloroplastic (417 aa).

The N-terminal 36 residues, Met1–Leu36, are a transit peptide targeting the chloroplast.

It belongs to the ATA15/OSA15 family. In terms of tissue distribution, expressed in leaves. Expressed in 7-day-old seedlings, roots, rosette leaves, cauline leaves and flower buds.

The protein resides in the plastid. It localises to the chloroplast. Involved in modulation of redox homeostasis to regulate leaf senescence mediated by age and stress factors during plant development. Its function is dependent of EIN2, a central factor of ethylene signaling. The chain is Senescence-associated protein AAF, chloroplastic from Arabidopsis thaliana (Mouse-ear cress).